Here is a 385-residue protein sequence, read N- to C-terminus: Outer membrane porin protein BP0840 (385 aa).

The first 20 residues, 1–20, serve as a signal peptide directing secretion; the sequence is MKKTLLAAALLAGFAGAAQA.

To bacterial outer membrane proteins and porins. Homotrimer.

Its subcellular location is the cell outer membrane. In terms of biological role, forms anion selective channels. The chain is Outer membrane porin protein BP0840 from Bordetella pertussis (strain Tohama I / ATCC BAA-589 / NCTC 13251).